The chain runs to 142 residues: Phosphoribosyl-AMP cyclohydrolase (142 aa).

D92 is a Mg(2+) binding site. C93 serves as a coordination point for Zn(2+). Positions 94 and 96 each coordinate Mg(2+). 2 residues coordinate Zn(2+): C109 and C116.

It belongs to the PRA-CH family. Homodimer. The cofactor is Mg(2+). It depends on Zn(2+) as a cofactor.

The protein localises to the cytoplasm. It catalyses the reaction 1-(5-phospho-beta-D-ribosyl)-5'-AMP + H2O = 1-(5-phospho-beta-D-ribosyl)-5-[(5-phospho-beta-D-ribosylamino)methylideneamino]imidazole-4-carboxamide. It participates in amino-acid biosynthesis; L-histidine biosynthesis; L-histidine from 5-phospho-alpha-D-ribose 1-diphosphate: step 3/9. In terms of biological role, catalyzes the hydrolysis of the adenine ring of phosphoribosyl-AMP. This Alcanivorax borkumensis (strain ATCC 700651 / DSM 11573 / NCIMB 13689 / SK2) protein is Phosphoribosyl-AMP cyclohydrolase.